A 379-amino-acid polypeptide reads, in one-letter code: Nematocin receptor 1 (379 aa).

Topologically, residues 19–48 (HNLYLFQMLELQENITDSQPMDPPSLEIMM) are extracellular. Residue asparagine 32 is glycosylated (N-linked (GlcNAc...) asparagine). A helical transmembrane segment spans residues 49–69 (LHHLMIILVTLFGNTLLIYVI). At 70-95 (YKNNAVLRRKRVTPVQMLMLHMCAAD) the chain is on the cytoplasmic side. A helical membrane pass occupies residues 96–116 (ILFALISVGPTMAITATVPFF). Residues 117–124 (YGPNLLCK) are Extracellular-facing. Cysteine 123 and cysteine 196 are disulfide-bonded. The chain crosses the membrane as a helical span at residues 125 to 145 (LTKFLQVIPMYASSFLLVAIS). At 146-168 (ADRYQAICRPLASMKSSIYNRPA) the chain is on the cytoplasmic side. Residues 169–189 (LYSGIAWTAAILFSTPQLYLF) traverse the membrane as a helical segment. The Extracellular portion of the chain corresponds to 190 to 207 (EKRNGDCSENYTTALQYQ). Residue asparagine 199 is glycosylated (N-linked (GlcNAc...) asparagine). Residues 208–228 (LYVCLFNSVVWLLPSAIAGWL) form a helical membrane-spanning segment. Residues 229-289 (YLCVCKAVWK…DRRRVQTVKL (61 aa)) lie on the Cytoplasmic side of the membrane. The chain crosses the membrane as a helical span at residues 290 to 310 (TLTIVAANFVLWAPFCITSVI). Topologically, residues 311–320 (DAVWPTAINS) are extracellular. Asparagine 319 carries an N-linked (GlcNAc...) asparagine glycan. The helical transmembrane segment at 321–343 (TFATYIMFFGNLNSCMNPWLWFH) threads the bilayer. Over 344 to 379 (FNRKQLKRACPCRKSSEPLIQSLVYVHVMTSEQSDF) the chain is Cytoplasmic.

This sequence belongs to the G-protein coupled receptor 1 family. Vasopressin/oxytocin receptor subfamily. Detected in the left ASE gustatory neuron, the chemosensory neuron pairs ASH and ADF, and the PQR tail neuron. In males, detected in hook and tail sensory neurons involved in vulval sensing and hermaphrodite contact, and in spicule protractor muscles.

Its subcellular location is the cell membrane. Receptor for nematocin. The activity of this receptor is mediated by G proteins which activate a phosphatidylinositol-calcium second messenger system. The activity of this receptor may be modulated by ntr-2, leading to reduced intracellular cAMP production. Plays a role in gustatory associative learning. Also plays a role in male mating behavior. The protein is Nematocin receptor 1 of Caenorhabditis elegans.